Reading from the N-terminus, the 1231-residue chain is S-layer protein A (1231 aa).

Residues 1–35 (MNKTLGLILTSVFLLSTLGIITGFVIPTQAANSND) form the signal peptide.

The protein belongs to the Sulfolobales SlaA family. In terms of assembly, the mushroom-shaped unit cells of the Sulfolobales' S-layers may consist of three SlaB subunits and six SlaA subunits.

Its subcellular location is the secreted. It is found in the cell wall. The protein localises to the S-layer. Its function is as follows. S-layer large protein. May form the highly ordered outer sheath. The polypeptide is S-layer protein A (Saccharolobus solfataricus (strain ATCC 35092 / DSM 1617 / JCM 11322 / P2) (Sulfolobus solfataricus)).